Reading from the N-terminus, the 366-residue chain is Dihydroorotate dehydrogenase (quinone) (366 aa).

FMN-binding positions include 74-78 and T98; that span reads AGFDK. K78 is a substrate binding site. 123–127 serves as a coordination point for substrate; sequence NRMGF. FMN-binding residues include N156 and N189. Position 189 (N189) interacts with substrate. S192 functions as the Nucleophile in the catalytic mechanism. Residue N194 coordinates substrate. FMN contacts are provided by K231 and T259. Position 260 to 261 (260 to 261) interacts with substrate; that stretch reads NT. FMN is bound by residues G285, G314, and 335–336; that span reads YT.

The protein belongs to the dihydroorotate dehydrogenase family. Type 2 subfamily. Monomer. FMN serves as cofactor.

The protein localises to the cell membrane. It carries out the reaction (S)-dihydroorotate + a quinone = orotate + a quinol. It functions in the pathway pyrimidine metabolism; UMP biosynthesis via de novo pathway; orotate from (S)-dihydroorotate (quinone route): step 1/1. Its function is as follows. Catalyzes the conversion of dihydroorotate to orotate with quinone as electron acceptor. The sequence is that of Dihydroorotate dehydrogenase (quinone) from Kineococcus radiotolerans (strain ATCC BAA-149 / DSM 14245 / SRS30216).